The sequence spans 779 residues: MSTKPTINKDELVTLFSQIGLDSSKAKETTNNATLSSNLQEIIKEAGAESGCEKSVGLLLYTLATKYPANAMKHRATLVDYIANKKSVNSINLQACLDYLRRTANEELNVAEFEQSCGVGVVITREQVAQAVSDYINKNKSDLLEKRYQFNIGGILMEIKNSLKWANAKDIKEEVDAAILSLLGPKTDADKAPPAKPVKPTTPTAVATTTAATTTTGDLSPIIPAELKPAKEEIKFPDPSDNIQNTPKLLADHLKTTGGKIVTRFPPEPNGYLHIGHAKAMHLNFGYAKKNGGKCYLRFDDTNPEKENQEYIDSIIDSVKWLGHEPCEITYSSSQFDTLYEMANELIRRGYAYVCHQTASEISEGREKMTDSPYRNRTVEENLKLFEDMRLGKFEEGKAILRMKGDMKHPNPCMRDLIAYRIKYHHHPMSGDKWCIYPSYDYTHCLVDSIENITHSLCTLEFEIRRLTYNWLIDVLGLYRPVVWEYARLNLTHTVLSKRKIITLVQNKIVNGWDDPRLSTLNAFRRKGYTPEAINLLCDTIGVTRTNGTTISYELLELCCRQDLDGKATRAMAVFDPIKVVITNYPEDKSEEINAPNIPSKPEKGTHKIDFSRIVYIERSDFRMEDNKDFFGLAPGKEILLKYAYNIKCEKVIQDADGKVTELHVTYDKDNSSKKLKTIHWVSSVAGTEPMKAEVRLYEHLFKDSEIGDDWLNNINPNSLRIIPNAFIDKTVLASKEYDRYQFERVGYFVVDKDTTSDKMVFNRTVSLKENKEKSKSRN.

Residues 268–270 and 274–280 contribute to the ATP site; these read EPN and HIGHAKA. L-glutamine contacts are provided by D300 and Y440. Residues T459, 488–489, and 496–498 contribute to the ATP site; these read RL and LSK.

This sequence belongs to the class-I aminoacyl-tRNA synthetase family.

The enzyme catalyses tRNA(Gln) + L-glutamine + ATP = L-glutaminyl-tRNA(Gln) + AMP + diphosphate. The chain is Probable glutamine--tRNA ligase (glnS) from Dictyostelium discoideum (Social amoeba).